Here is a 571-residue protein sequence, read N- to C-terminus: E3 ubiquitin-protein ligase RNF168 (571 aa).

The segment at 16 to 55 (CGICMEILVEPVTLPCNHTLCKPCFQSTVEKASLCCPFCR) adopts an RING-type zinc-finger fold. S70 bears the Phosphoserine mark. The LR motif 1 signature appears at 110 to 128 (LSKPGELRREYEEEISKVA). At S134 the chain carries Phosphoserine. Positions 143 to 151 (EEYIQRLLA) match the UMI motif motif. Disordered regions lie at residues 151-174 (AEEEEEEKRQAEKRRRAMEEQLKS) and 191-292 (EGSI…GADS). Residues 168–191 (MEEQLKSDEELARKLSIDINNFCE) carry the MIU motif 1 motif. S197 carries the phosphoserine modification. A compositionally biased stretch (basic and acidic residues) spans 202–214 (RKSDPVTPKSEKK). A Glycyl lysine isopeptide (Lys-Gly) (interchain with G-Cter in SUMO2) cross-link involves residue K210. Polar residues predominate over residues 231 to 242 (PKSQFGSASHSE). A compositionally biased stretch (basic and acidic residues) spans 243 to 263 (AVQEVRKDSVSKDIDSSDRKS). Residue T362 is modified to Phosphothreonine. Disordered stretches follow at residues 390-422 (NQESSFEAVKDPCFSAKRRKVSPESSPDQEETE) and 459-560 (KEQM…ISQK). Phosphoserine occurs at positions 411, 414, and 415. The short motif at 439–462 (RHKQEEQDRLLALQLQKEVDKEQM) is the MIU motif 2 element. Positions 466 to 477 (RQKGSPDEYHLR) match the LR motif 2 motif. A Phosphoserine modification is found at S470. Residues 508–519 (PTPERGSRDKNR) show a composition bias toward basic and acidic residues. 2 stretches are compositionally biased toward polar residues: residues 520-530 (QVSLKMQLKQS) and 549-560 (SAHSLQPSISQK). K528 participates in a covalent cross-link: Glycyl lysine isopeptide (Lys-Gly) (interchain with G-Cter in SUMO2).

The protein belongs to the RNF168 family. In terms of assembly, monomer. Interacts with UBE2N/UBC13. Sumoylated with SUMO1 by PIAS4 in response to double-strand breaks (DSBs). In terms of processing, ubiquitinated.

The protein localises to the nucleus. The catalysed reaction is S-ubiquitinyl-[E2 ubiquitin-conjugating enzyme]-L-cysteine + [acceptor protein]-L-lysine = [E2 ubiquitin-conjugating enzyme]-L-cysteine + N(6)-ubiquitinyl-[acceptor protein]-L-lysine.. The protein operates within protein modification; protein ubiquitination. Its function is as follows. E3 ubiquitin-protein ligase required for accumulation of repair proteins to sites of DNA damage. Acts with UBE2N/UBC13 to amplify the RNF8-dependent histone ubiquitination. Recruited to sites of DNA damage at double-strand breaks (DSBs) by binding to ubiquitinated histone H2A and H2AX and amplifies the RNF8-dependent H2A ubiquitination, promoting the formation of 'Lys-63'-linked ubiquitin conjugates. This leads to concentrate ubiquitinated histones H2A and H2AX at DNA lesions to the threshold required for recruitment of TP53BP1 and BRCA1. Also recruited at DNA interstrand cross-links (ICLs) sites and promotes accumulation of 'Lys-63'-linked ubiquitination of histones H2A and H2AX, leading to recruitment of FAAP20/C1orf86 and Fanconi anemia (FA) complex, followed by interstrand cross-link repair. H2A ubiquitination also mediates the ATM-dependent transcriptional silencing at regions flanking DSBs in cis, a mechanism to avoid collision between transcription and repair intermediates. Also involved in class switch recombination in immune system, via its role in regulation of DSBs repair. Following DNA damage, promotes the ubiquitination and degradation of JMJD2A/KDM4A in collaboration with RNF8, leading to unmask H4K20me2 mark and promote the recruitment of TP53BP1 at DNA damage sites. Not able to initiate 'Lys-63'-linked ubiquitination in vitro; possibly due to partial occlusion of the UBE2N/UBC13-binding region. Catalyzes monoubiquitination of 'Lys-13' and 'Lys-15' of nucleosomal histone H2A (H2AK13Ub and H2AK15Ub, respectively). The polypeptide is E3 ubiquitin-protein ligase RNF168 (Homo sapiens (Human)).